Here is a 735-residue protein sequence, read N- to C-terminus: Disintegrin and metalloproteinase domain-containing protein 2 (735 aa).

The first 16 residues, 1–16, serve as a signal peptide directing secretion; that stretch reads MWRVLFLLSGLGGLWM. A propeptide spanning residues 17–174 is cleaved from the precursor; sequence DSNFDSLPVQ…FKLQSIEPQK (158 aa). Residues 17 to 686 lie on the Extracellular side of the membrane; it reads DSNFDSLPVQ…ENVYHSKPMR (670 aa). Asparagine 76, asparagine 122, and asparagine 220 each carry an N-linked (GlcNAc...) asparagine glycan. In terms of domain architecture, Peptidase M12B spans 178 to 375; sequence KYIEMHVVVE…QKSQCLHNQP (198 aa). Cystine bridges form between cysteine 287–cysteine 370, cysteine 329–cysteine 354, cysteine 331–cysteine 336, and cysteine 445–cysteine 465. 3 N-linked (GlcNAc...) asparagine glycosylation sites follow: asparagine 353, asparagine 459, and asparagine 566. Positions 384 to 473 constitute a Disintegrin domain; the sequence is QAVCGNAKLE…SCPENHFIQT (90 aa). The EGF-like domain maps to 612–645; sequence LGYDCTTDKCNHRGVCNNKKHCHCSASYLPPDCS. Cystine bridges form between cysteine 616/cysteine 627, cysteine 621/cysteine 633, and cysteine 635/cysteine 644. The chain crosses the membrane as a helical span at residues 687-707; it reads WPLFLFIPFFIIFCVLIAIMV. The Cytoplasmic portion of the chain corresponds to 708 to 735; that stretch reads KVHFQRKKWRTEDYSTDEQPESESEPKG. Serine 729 carries the phosphoserine modification.

As to quaternary structure, heterodimer with ADAM1/fertilin subunit alpha. Post-translationally, the signal and the metalloprotease domain are cleaved during the epididymal maturation of the spermatozoa. In terms of tissue distribution, expressed specifically in testis.

Its subcellular location is the membrane. Sperm surface membrane protein that may be involved in sperm-egg plasma membrane adhesion and fusion during fertilization. Could have a direct role in sperm-zona binding or migration of sperm from the uterus into the oviduct. Interactions with egg membrane could be mediated via binding between its disintegrin-like domain to one or more integrins receptors on the egg. This is a non catalytic metalloprotease-like protein. This Macaca fascicularis (Crab-eating macaque) protein is Disintegrin and metalloproteinase domain-containing protein 2 (ADAM2).